We begin with the raw amino-acid sequence, 740 residues long: Polyribonucleotide nucleotidyltransferase (740 aa).

Mg(2+) contacts are provided by D496 and D502. The KH domain occupies 563–622 (PAIIRTSIHPDKIRDIIGPGGKIIKKLVEETGADIDIEDDGRVFIAAVDREKGKRALEII). In terms of domain architecture, S1 motif spans 632–706 (GKLYNGKVTR…QQGRLKLSKK (75 aa)). Residues 707–740 (EAMRDMGLAPAESTSEQPEKRERRPFSRPKATKE) are disordered. Over residues 723-740 (QPEKRERRPFSRPKATKE) the composition is skewed to basic and acidic residues.

It belongs to the polyribonucleotide nucleotidyltransferase family. Mg(2+) is required as a cofactor.

It localises to the cytoplasm. It carries out the reaction RNA(n+1) + phosphate = RNA(n) + a ribonucleoside 5'-diphosphate. Its function is as follows. Involved in mRNA degradation. Catalyzes the phosphorolysis of single-stranded polyribonucleotides processively in the 3'- to 5'-direction. This is Polyribonucleotide nucleotidyltransferase from Desulforamulus reducens (strain ATCC BAA-1160 / DSM 100696 / MI-1) (Desulfotomaculum reducens).